A 27-amino-acid chain; its full sequence is Flagellar filament 31.5 kDa core protein (27 aa).

It belongs to the bacterial flagellin family. The flagellum consists of an outer layer composed of repeating units of FlaA around a core that contains one or all of five antigenically related polypeptides.

It is found in the periplasmic flagellum. It localises to the periplasm. Component of the core of the flagella. This chain is Flagellar filament 31.5 kDa core protein, found in Spirochaeta aurantia.